We begin with the raw amino-acid sequence, 4226 residues long: Guanylate cyclase alpha (4226 aa).

Residues 1–104 (MSDSKKHYNE…SFIFKGLYEQ (104 aa)) lie on the Cytoplasmic side of the membrane. The helical transmembrane segment at 105–125 (FLRLPNIWFLLISLLEFIPQY) threads the bilayer. Over 126–131 (QNLSNY) the chain is Extracellular. N-linked (GlcNAc...) asparagine glycosylation is present at Asn-127. Residues 132–152 (MYYSKHSSFFLLLFFICVSII) traverse the membrane as a helical segment. At 153–337 (KNIYEDSRRS…LGYVNKELNS (185 aa)) the chain is on the cytoplasmic side. A helical membrane pass occupies residues 338-358 (YTIIGLIFTFICVFISVLFKW). Over 359-392 (TEDDKFRNGSHFFLITVKDNICESIVKYTLLYSN) the chain is Extracellular. Asn-366 carries N-linked (GlcNAc...) asparagine glycosylation. Residues 393-413 (IIPISILISVDLISILQSILI) traverse the membrane as a helical segment. Residues 414 to 2083 (ENDNHISTFE…FIYGSKHLYT (1670 aa)) lie on the Cytoplasmic side of the membrane. Disordered stretches follow at residues 552–572 (EHSQTLDNNNNNDNNNNNNIC), 832–904 (SSKN…SNND), 968–989 (INNNNNNNNDQKTNNLKYKSSS), and 1740–1765 (NINKNYKYDKNDKHNNNNNNNNNNSN). Residues 558 to 570 (DNNNNNDNNNNNN) show a composition bias toward low complexity. Acidic residues predominate over residues 838-847 (TLDDPTELIS). Residues 854–873 (LRDKYEHTSDKKNDTNKNRD) are compositionally biased toward basic and acidic residues. Residues 874–904 (GANNSNNNNNKDVSNNKNKNNNNYNYNSNND) show a composition bias toward low complexity. Positions 1745-1754 (YKYDKNDKHN) are enriched in basic and acidic residues. The segment covering 1755-1765 (NNNNNNNNNSN) has biased composition (low complexity). Residues 2084–2104 (ISIILYWNFFKNILLILPIFF) traverse the membrane as a helical segment. Residues 2105-2119 (YQAYASWSCVKIYPE) lie on the Extracellular side of the membrane. A helical transmembrane segment spans residues 2120–2140 (LLYTFFSIFWVFIPIIYYMFL). The Cytoplasmic segment spans residues 2141–2169 (QHNLNYDILYNIPLFYALSRRRYNMNCFK). A helical membrane pass occupies residues 2170–2190 (FLPWIFEAIFYSMIIYFFAYA). The Extracellular portion of the chain corresponds to 2191-2202 (ALKENSHLNNGE). Residues 2203 to 2223 (VITINTFGNICFIGCLLISIL) traverse the membrane as a helical segment. Over 2224–2235 (RLFLEGSLWSPS) the chain is Cytoplasmic. Residues 2236 to 2256 (ILITCFGCFLFVFFPSLLFIC) form a helical membrane-spanning segment. Topologically, residues 2257 to 2275 (FAYLSNEYIREVFRQTFLW) are extracellular. A helical membrane pass occupies residues 2276–2296 (APLYVLLILWFSTCIISYIFI). At 2297-2787 (NFTKSILFPN…QIHKKNKFYK (491 aa)) the chain is on the cytoplasmic side. A disordered region spans residues 2477–2505 (NNDNNNDDNDNDNNNNNNNNDNYNNNDHN). Over residues 2488-2502 (DNNNNNNNNDNYNNN) the composition is skewed to low complexity. A helical membrane pass occupies residues 2788–2808 (TFTPWYRFIFLLLGVFFLYVW). Over 2809-2828 (KLESSLSQLWNMPSDASTDV) the chain is Extracellular. A helical membrane pass occupies residues 2829 to 2849 (FILFLSLLLELVLLAATVTTF). Residues 2850–2860 (FSNIFIENFNK) lie on the Cytoplasmic side of the membrane. Residues 2861 to 2881 (IISAVVILIITYHVVSYSVTH) form a helical membrane-spanning segment. Residues 2882–2900 (IDGVFQAVLFPLYTFVILR) are Extracellular-facing. The chain crosses the membrane as a helical span at residues 2901–2921 (LPFVNAVLCNIIFLGLFIIRF). At 2922–2930 (NGDHFLDKK) the chain is on the cytoplasmic side. A helical membrane pass occupies residues 2931-2951 (GLAHYIPLFIGVDVFVGFVGY). The Extracellular portion of the chain corresponds to 2952–3008 (RLEYNQRKNFLLEYSVESSRRKQREILNTMLPPFVVDEMIYSELNEEGIPISLKAED). The helical transmembrane segment at 3009–3029 (ISTVTIIFCDIYDFQNIVASI) threads the bilayer. The 258-residue stretch at 3013–3270 (TIIFCDIYDF…DTVNTASRMK (258 aa)) folds into the Guanylate cyclase 1 domain. The Cytoplasmic segment spans residues 3030 to 3738 (EPTRLVEVLD…SNINSIEQAL (709 aa)). Disordered stretches follow at residues 3077–3150 (EDEL…FEED) and 3201–3230 (DANDDTHNVNDSFNNDKAENDNTNTDNNKP). Composition is skewed to low complexity over residues 3083–3098 (NKYSNNNKNNNNNYYY) and 3108–3138 (NNNNNNNNNNNNNNNNNNNNLNNNNNNNNVN). Acidic residues predominate over residues 3140–3150 (SDDDGDFFEED). Residues 3201-3220 (DANDDTHNVNDSFNNDKAEN) are compositionally biased toward basic and acidic residues. The helical transmembrane segment at 3739–3759 (IIFLVTFVMQTLISSTVSIVF) threads the bilayer. At 3760 to 3773 (IDHKRATQTLHINY) the chain is on the extracellular side. Residues 3774–3794 (FAYWSVRSVYTFFGFVLWLLF) traverse the membrane as a helical segment. Over 3795-3811 (HYRTRPEVSSLLNIKWM) the chain is Cytoplasmic. The helical transmembrane segment at 3812–3832 (IFFLNLLFISAACVFSIAYLW) threads the bilayer. The Extracellular segment spans residues 3833–3840 (AISETDQT). Residues 3841-3861 (TSYTIWMTNDTIEFFFYLVIL) traverse the membrane as a helical segment. Residues 3862–3871 (HHNTGMLFQT) are Cytoplasmic-facing. Residues 3872–3892 (CILVDLLFITMSLTFIATSVV) form a helical membrane-spanning segment. Residue Lys-3893 is a topological domain, extracellular. A helical transmembrane segment spans residues 3894-3914 (TITTDSTVLLIPWYVAFNLIS). Residues 3915-4226 (TYCKESIDRR…INVNDRQSNL (312 aa)) lie on the Cytoplasmic side of the membrane. The Guanylate cyclase 2 domain maps to 3970–4104 (TFLFADICGF…IDVLTGNLME (135 aa)). Mg(2+)-binding residues include Asp-3975, Ile-3976, and Asp-4019.

It in the N-terminal section; belongs to the cation transport ATPase (P-type) (TC 3.A.3) family. Type IV subfamily. The protein in the C-terminal section; belongs to the adenylyl cyclase class-4/guanylyl cyclase family. Mg(2+) serves as cofactor. The cofactor is Mn(2+).

It localises to the cell membrane. The protein resides in the cytoplasmic vesicle membrane. It catalyses the reaction GTP = 3',5'-cyclic GMP + diphosphate. Functionally, catalyzes the synthesis of the second messenger cGMP from GTP. In asexual blood stage schizonts, required for cGMP production which is essential for PKG activation, PKG-dependent Ca(2+) release, and ultimately merozoite egress from host erythrocytes. The sequence is that of Guanylate cyclase alpha from Plasmodium falciparum (isolate 3D7).